Here is a 625-residue protein sequence, read N- to C-terminus: MQVPSPSAREAASMYGTAVAVFLVLLVAVLQGLAPPESPLPYRIPLDPKGDLELSWDVSYTQKTIYFQLLVQELKAGVLFGMSDRGELENADLVVLWTDGDNAYFGDAWSDQRGQIHLDSQQDYQLLRAQRTPKGLCLLFKRPFGTCDPKDYFIEDGTVHLVYGVLEEPFGSLEAINTSGLQKGLQRVQLLKPKISIPALPEDRRTMDIQAHNVLIPSKTTYWCHLTKLPQDFPRHHIVMYEPIITKGNEALVHHIEIFQCTNQFQNITSFSGSCDSKEKPQELKVCRHVLAAWALGARAFYYPEEAGLAFGGSNSSRFLLLEIHYHNPTNIRGRYDNSGIRLHYTAKLRHFNAGIMELGLVYTPVMAIPPKESAFVLTGYCTAKCTQAALPPLGIRIFASQLHTHLTGTKVVTMLVRDGQEIEIVNRDDHYSPNFQEIRMLKKTVYVYPGDVLITSCTYNTEDKNEATVGGLGTQEEMCVNYIHYYPQTQLELCKSHIDPCFLQKYFHLVNRSNLGEYCTCPQASGTTCPQASGTTCPRASVPEQFASVPWNSFSRVVLKALYDFIPVTVHCNKSSAVRFPGKWDLQPLPEIISKLKEPTPRCPTSRDQSSSSLTVVNIGGGKV.

Over methionine 1–arginine 9 the chain is Cytoplasmic. The chain crosses the membrane as a helical; Signal-anchor for type II membrane protein span at residues glutamate 10–leucine 30. The Intragranular segment spans residues glutamine 31–valine 625. In terms of domain architecture, DOMON spans glycine 50–leucine 166. 6 disulfides stabilise this stretch: cysteine 147/cysteine 604, cysteine 224/cysteine 275, cysteine 261/cysteine 287, cysteine 382/cysteine 495, cysteine 386/cysteine 573, and cysteine 458/cysteine 480. Asparagine 177 carries an N-linked (GlcNAc...) asparagine glycan. Residue tyrosine 222 is part of the active site. Histidine 254 and histidine 255 together coordinate Cu(2+). The N-linked (GlcNAc...) asparagine glycan is linked to asparagine 315. The Cu(2+) site is built by histidine 325, histidine 404, histidine 406, and methionine 479. Residue histidine 404 is part of the active site. Asparagine 574 carries an N-linked (GlcNAc...) asparagine glycan.

The protein belongs to the copper type II ascorbate-dependent monooxygenase family. In terms of assembly, homotetramer; composed of two disulfide-linked dimers. It depends on Cu(2+) as a cofactor. Proteolytic cleavage after the membrane-anchor leads to the release of the soluble form. Post-translationally, N-glycosylated.

It localises to the cytoplasmic vesicle. Its subcellular location is the secretory vesicle lumen. The protein resides in the secretory vesicle. It is found in the chromaffin granule lumen. The protein localises to the secreted. It localises to the secretory vesicle membrane. Its subcellular location is the chromaffin granule membrane. The enzyme catalyses dopamine + 2 L-ascorbate + O2 = (R)-noradrenaline + 2 monodehydro-L-ascorbate radical + H2O. Its pathway is catecholamine biosynthesis; (R)-noradrenaline biosynthesis; (R)-noradrenaline from dopamine: step 1/1. Catalyzes the hydroxylation of dopamine to noradrenaline (also known as norepinephrine), and is thus vital for regulation of these neurotransmitters. The polypeptide is Dopamine beta-hydroxylase (DBH) (Canis lupus familiaris (Dog)).